Here is a 385-residue protein sequence, read N- to C-terminus: Chaperone protein DnaJ (385 aa).

The J domain maps to 5–72 (DYYEVLGVGK…QKRAAYDQFG (68 aa)). A disordered region spans residues 26–48 (RKLAMKHHPDRNQGDGAKASEEK). Residues 35-48 (DRNQGDGAKASEEK) are compositionally biased toward basic and acidic residues. Residues 145-223 (GKESQIRIPT…CNGAGKVKKQ (79 aa)) form a CR-type zinc finger. Zn(2+) is bound by residues Cys158, Cys161, Cys175, Cys178, Cys197, Cys200, Cys211, and Cys214. CXXCXGXG motif repeat units follow at residues 158-165 (CDTCHGSG), 175-182 (CTTCHGAG), 197-204 (CPHCHGSG), and 211-218 (CTSCNGAG). Residues 362–385 (FRKGGDKHSPTSKSWTDRVKDLFK) are disordered.

The protein belongs to the DnaJ family. As to quaternary structure, homodimer. Requires Zn(2+) as cofactor.

Its subcellular location is the cytoplasm. Functionally, participates actively in the response to hyperosmotic and heat shock by preventing the aggregation of stress-denatured proteins and by disaggregating proteins, also in an autonomous, DnaK-independent fashion. Unfolded proteins bind initially to DnaJ; upon interaction with the DnaJ-bound protein, DnaK hydrolyzes its bound ATP, resulting in the formation of a stable complex. GrpE releases ADP from DnaK; ATP binding to DnaK triggers the release of the substrate protein, thus completing the reaction cycle. Several rounds of ATP-dependent interactions between DnaJ, DnaK and GrpE are required for fully efficient folding. Also involved, together with DnaK and GrpE, in the DNA replication of plasmids through activation of initiation proteins. This is Chaperone protein DnaJ from Leptothrix cholodnii (strain ATCC 51168 / LMG 8142 / SP-6) (Leptothrix discophora (strain SP-6)).